A 167-amino-acid chain; its full sequence is MSKETIAVKAQEVEEVAEQLKSSVSAIVVDYRGLTVEQVTDLRKQLREAGVKMRVIKNKIMVRAADKAGFEDLKPVFAGPTAVAFSEEDPVAPAKILANFAKTADALQLKGGVIEGKVADLETVQEYATMPSREELLATIANLLQAPVRNVAYAVKAVAEKGDEDAA.

The protein belongs to the universal ribosomal protein uL10 family. As to quaternary structure, part of the ribosomal stalk of the 50S ribosomal subunit. The N-terminus interacts with L11 and the large rRNA to form the base of the stalk. The C-terminus forms an elongated spine to which L12 dimers bind in a sequential fashion forming a multimeric L10(L12)X complex.

Functionally, forms part of the ribosomal stalk, playing a central role in the interaction of the ribosome with GTP-bound translation factors. This is Large ribosomal subunit protein uL10 from Lactiplantibacillus plantarum (strain ATCC BAA-793 / NCIMB 8826 / WCFS1) (Lactobacillus plantarum).